Consider the following 329-residue polypeptide: MWGLKVLLLPVVSFALYPEEILDTHWELWKKTHRKQYNNKVDEISRRLIWEKNLKYISIHNLEASLGVHTYELAMNHLGDMTSEEVVQKMTGLKVPLSHSRSNDTLYIPEWEGRAPDSVDYRKKGYVTPVKNQGQCGSCWAFSSVGALEGQLKKKTGKLLNLSPQNLVDCVSENDGCGGGYMTNAFQYVQKNRGIDSEDAYPYVGQEESCMYNPTGKAAKCRGYREIPEGNEKALKRAVARVGPVSVAIDASLTSFQFYSKGVYYDESCNSDNLNHAVLAVGYGIQKGNKHWIIKNSWGENWGNKGYILMARNKNNACGIANLASFPKM.

Residues 1 to 15 (MWGLKVLLLPVVSFA) form the signal peptide. Residues 16–114 (LYPEEILDTH…TLYIPEWEGR (99 aa)) constitute a propeptide, activation peptide. N103 carries N-linked (GlcNAc...) asparagine glycosylation. 3 disulfides stabilise this stretch: C136–C177, C170–C210, and C269–C318. The active site involves C139. Catalysis depends on residues H276 and N296.

Belongs to the peptidase C1 family. Predominantly expressed in osteoclasts (bones). Expressed in thyroid epithelial cells.

The protein localises to the lysosome. It is found in the secreted. Its subcellular location is the apical cell membrane. It carries out the reaction Broad proteolytic activity. With small-molecule substrates and inhibitors, the major determinant of specificity is P2, which is preferably Leu, Met &gt; Phe, and not Arg.. Thiol protease involved in osteoclastic bone resorption and may participate partially in the disorder of bone remodeling. Displays potent endoprotease activity against fibrinogen at acid pH. May play an important role in extracellular matrix degradation. Involved in the release of thyroid hormone thyroxine (T4) by limited proteolysis of TG/thyroglobulin in the thyroid follicle lumen. In Homo sapiens (Human), this protein is Cathepsin K (CTSK).